Here is a 196-residue protein sequence, read N- to C-terminus: Chromophore lyase CpcS/CpeS 2 (196 aa).

This sequence belongs to the CpcS/CpeS biliprotein lyase family.

Functionally, covalently attaches a chromophore to Cys residue(s) of phycobiliproteins. The polypeptide is Chromophore lyase CpcS/CpeS 2 (Trichodesmium erythraeum (strain IMS101)).